A 1026-amino-acid polypeptide reads, in one-letter code: DNA polymerase catalytic subunit (1026 aa).

Residues 664–695 are a coiled coil; it reads LKTWLAKRKSIKKELEQCQDAKMKTILDKQQL.

This sequence belongs to the DNA polymerase type-B family.

Its subcellular location is the host nucleus. The catalysed reaction is DNA(n) + a 2'-deoxyribonucleoside 5'-triphosphate = DNA(n+1) + diphosphate. Functionally, replicates viral genomic DNA. The polypeptide is DNA polymerase catalytic subunit (9) (Alcelaphine herpesvirus 1 (strain C500) (AlHV-1)).